Reading from the N-terminus, the 235-residue chain is 1-(5-phosphoribosyl)-5-[(5-phosphoribosylamino)methylideneamino] imidazole-4-carboxamide isomerase (235 aa).

D8 (proton acceptor) is an active-site residue. D129 serves as the catalytic Proton donor.

This sequence belongs to the HisA/HisF family.

Its subcellular location is the cytoplasm. It carries out the reaction 1-(5-phospho-beta-D-ribosyl)-5-[(5-phospho-beta-D-ribosylamino)methylideneamino]imidazole-4-carboxamide = 5-[(5-phospho-1-deoxy-D-ribulos-1-ylimino)methylamino]-1-(5-phospho-beta-D-ribosyl)imidazole-4-carboxamide. It participates in amino-acid biosynthesis; L-histidine biosynthesis; L-histidine from 5-phospho-alpha-D-ribose 1-diphosphate: step 4/9. This is 1-(5-phosphoribosyl)-5-[(5-phosphoribosylamino)methylideneamino] imidazole-4-carboxamide isomerase from Thermoanaerobacter sp. (strain X514).